A 214-amino-acid polypeptide reads, in one-letter code: Probable transaldolase (214 aa).

K83 (schiff-base intermediate with substrate) is an active-site residue.

This sequence belongs to the transaldolase family. Type 3B subfamily.

The protein resides in the cytoplasm. The catalysed reaction is D-sedoheptulose 7-phosphate + D-glyceraldehyde 3-phosphate = D-erythrose 4-phosphate + beta-D-fructose 6-phosphate. It participates in carbohydrate degradation; pentose phosphate pathway; D-glyceraldehyde 3-phosphate and beta-D-fructose 6-phosphate from D-ribose 5-phosphate and D-xylulose 5-phosphate (non-oxidative stage): step 2/3. Transaldolase is important for the balance of metabolites in the pentose-phosphate pathway. In Desulfatibacillum aliphaticivorans, this protein is Probable transaldolase.